The following is a 27-amino-acid chain: Dermaseptin-S4 (27 aa).

Belongs to the frog skin active peptide (FSAP) family. Dermaseptin subfamily. In terms of assembly, monomer and oligomer. Forms aggregates in aqueous environments. In terms of tissue distribution, expressed by the skin glands.

The protein resides in the secreted. Its function is as follows. Potent antimicrobial peptide with activity against bacteria and protozoa. Also has activity against fungi. Also shows activity against enveloped herpes simplex virus type 1. Probably acts by disturbing membrane functions with its amphipathic structure. Binds to healthy erythrocytes (this binding is receptor independent), and has strong hemolytic activity. Does not bind to P.falciparum infected erythrocytes, but accumulates within the parasite. Kills the parasite, and only at high concentrations has a hemolytic activity on the host cell. In vitro, shows high spermicidal activities. The protein is Dermaseptin-S4 of Phyllomedusa sauvagei (Sauvage's leaf frog).